The primary structure comprises 521 residues: Envelope glycoprotein (521 aa).

Residues 1 to 20 (MVDSTIRLVATIFLISLTQQ) form the signal peptide. Asn44, Asn158, Asn189, and Asn396 each carry an N-linked (GlcNAc...) asparagine; by host glycan. A helical membrane pass occupies residues 501–517 (ISWVVVIGVVLVGVCLM).

In terms of assembly, homooligomer; disulfide-linked (possibly homodimer).

It is found in the virion membrane. Functionally, attaches the virus to host cellular receptor and later induces fusion of virion with host membrane. In Dhori virus (strain Indian/1313/61) (Dho), this protein is Envelope glycoprotein (P4).